Consider the following 492-residue polypeptide: Trigger factor (492 aa).

A disordered region spans residues 77–96; it reads EILSSRGEKSATQPAISMTE. The 86-residue stretch at 169 to 254 folds into the PPIase FKBP-type domain; it reads GDRVTMNYLG…VKEVAAAAAV (86 aa). Positions 439 to 492 are disordered; sequence ELLADDGEEETETKKKAPAKKKAAAKADDAAEGEEAAPKKKAPAKKKATEADAE.

It belongs to the FKBP-type PPIase family. Tig subfamily.

Its subcellular location is the cytoplasm. The enzyme catalyses [protein]-peptidylproline (omega=180) = [protein]-peptidylproline (omega=0). In terms of biological role, involved in protein export. Acts as a chaperone by maintaining the newly synthesized protein in an open conformation. Functions as a peptidyl-prolyl cis-trans isomerase. The protein is Trigger factor of Agrobacterium fabrum (strain C58 / ATCC 33970) (Agrobacterium tumefaciens (strain C58)).